A 283-amino-acid polypeptide reads, in one-letter code: Putative casein kinase II subunit beta-4 (283 aa).

2 disordered regions span residues 1–23 and 35–92; these read MYKDRSGGGIMGGGGSSRSEILG and LDKH…SEGD. Residues 7–16 are compositionally biased toward gly residues; sequence GGGIMGGGGS. A compositionally biased stretch (polar residues) spans 58 to 70; that stretch reads VPSTSTAKSQLHS.

The protein belongs to the casein kinase 2 subunit beta family. In terms of assembly, heterotetramer of two catalytic alpha subunits and two regulatory beta subunits. In terms of processing, phosphorylated by alpha subunit.

The protein localises to the cytoplasm. The protein resides in the cytosol. Its function is as follows. Plays a complex role in regulating the basal catalytic activity of the alpha subunit. The tetrameric holoenzyme CK2, composed of two alpha and two beta subunits, phosphorylates the transcription factor PIF1 after an exposure to light, resulting in a proteasome-dependent degradation of PIF1 and promotion of photomorphogenesis. CK2 phosphorylates translation initiation factors. May participate in the regulation of the initiation of translation. The chain is Putative casein kinase II subunit beta-4 from Arabidopsis thaliana (Mouse-ear cress).